Here is a 389-residue protein sequence, read N- to C-terminus: LL-diaminopimelate aminotransferase (389 aa).

Tyr-13 and Gly-38 together coordinate substrate. Pyridoxal 5'-phosphate contacts are provided by residues Tyr-67, 101–102 (SK), Tyr-126, Asn-176, Tyr-207, and 235–237 (SLS). The substrate site is built by Lys-102, Tyr-126, and Asn-176. Residue Lys-238 is modified to N6-(pyridoxal phosphate)lysine. Arg-246 provides a ligand contact to pyridoxal 5'-phosphate. Substrate is bound at residue Arg-364.

Belongs to the class-I pyridoxal-phosphate-dependent aminotransferase family. LL-diaminopimelate aminotransferase subfamily. In terms of assembly, homodimer. Requires pyridoxal 5'-phosphate as cofactor.

It catalyses the reaction (2S,6S)-2,6-diaminopimelate + 2-oxoglutarate = (S)-2,3,4,5-tetrahydrodipicolinate + L-glutamate + H2O + H(+). The protein operates within amino-acid biosynthesis; L-lysine biosynthesis via DAP pathway; LL-2,6-diaminopimelate from (S)-tetrahydrodipicolinate (aminotransferase route): step 1/1. In terms of biological role, involved in the synthesis of meso-diaminopimelate (m-DAP or DL-DAP), required for both lysine and peptidoglycan biosynthesis. Catalyzes the direct conversion of tetrahydrodipicolinate to LL-diaminopimelate. This is LL-diaminopimelate aminotransferase from Halothermothrix orenii (strain H 168 / OCM 544 / DSM 9562).